The chain runs to 294 residues: Small ribosomal subunit protein uS2 (294 aa).

The interval 232–294 (RATGTTEAPE…SAAGEADAAK (63 aa)) is disordered. The segment covering 246-259 (EWERELLEGSKSEE) has biased composition (basic and acidic residues). Over residues 260-294 (AAAPAAAEEAPAAAEEAPAAAEATESAAGEADAAK) the composition is skewed to low complexity.

It belongs to the universal ribosomal protein uS2 family.

In Arthrobacter sp. (strain FB24), this protein is Small ribosomal subunit protein uS2.